We begin with the raw amino-acid sequence, 254 residues long: 3-deoxy-manno-octulosonate cytidylyltransferase (254 aa).

It belongs to the KdsB family.

The protein resides in the cytoplasm. The enzyme catalyses 3-deoxy-alpha-D-manno-oct-2-ulosonate + CTP = CMP-3-deoxy-beta-D-manno-octulosonate + diphosphate. It participates in nucleotide-sugar biosynthesis; CMP-3-deoxy-D-manno-octulosonate biosynthesis; CMP-3-deoxy-D-manno-octulosonate from 3-deoxy-D-manno-octulosonate and CTP: step 1/1. The protein operates within bacterial outer membrane biogenesis; lipopolysaccharide biosynthesis. Activates KDO (a required 8-carbon sugar) for incorporation into bacterial lipopolysaccharide in Gram-negative bacteria. The chain is 3-deoxy-manno-octulosonate cytidylyltransferase from Haemophilus influenzae (strain 86-028NP).